Consider the following 311-residue polypeptide: 3-dehydro-scyllo-inosose hydrolase (311 aa).

Glu35, His37, Asp46, His117, and Glu173 together coordinate Zn(2+).

The protein belongs to the creatininase superfamily. Homotrimer. The cofactor is Zn(2+).

The enzyme catalyses 3-dehydro-scyllo-inosose + H2O = 5-dehydro-L-gluconate + H(+). It functions in the pathway polyol metabolism; myo-inositol metabolism. In terms of biological role, catalyzes the ring-opening hydrolysis of 3-dehydro-scyllo-inosose (diketo-inositol) to 5-dehydro-L-gluconate, and thus probably functions in a myo-inositol degradation pathway together with IolG, IolM and IolO. The polypeptide is 3-dehydro-scyllo-inosose hydrolase (Thermotoga maritima (strain ATCC 43589 / DSM 3109 / JCM 10099 / NBRC 100826 / MSB8)).